Reading from the N-terminus, the 339-residue chain is tRNA N6-adenosine threonylcarbamoyltransferase (339 aa).

Fe cation-binding residues include His111 and His115. Residues 139 to 143 (LVSGG), Asp172, Gly185, Asp189, and Asn280 contribute to the substrate site. A Fe cation-binding site is contributed by Asp308.

The protein belongs to the KAE1 / TsaD family. Fe(2+) is required as a cofactor.

It localises to the cytoplasm. The catalysed reaction is L-threonylcarbamoyladenylate + adenosine(37) in tRNA = N(6)-L-threonylcarbamoyladenosine(37) in tRNA + AMP + H(+). Functionally, required for the formation of a threonylcarbamoyl group on adenosine at position 37 (t(6)A37) in tRNAs that read codons beginning with adenine. Is involved in the transfer of the threonylcarbamoyl moiety of threonylcarbamoyl-AMP (TC-AMP) to the N6 group of A37, together with TsaE and TsaB. TsaD likely plays a direct catalytic role in this reaction. This Bacteroides thetaiotaomicron (strain ATCC 29148 / DSM 2079 / JCM 5827 / CCUG 10774 / NCTC 10582 / VPI-5482 / E50) protein is tRNA N6-adenosine threonylcarbamoyltransferase.